A 529-amino-acid chain; its full sequence is ATP synthase subunit alpha (529 aa).

173-180 (GDRQTGKT) contributes to the ATP binding site.

The protein belongs to the ATPase alpha/beta chains family. In terms of assembly, F-type ATPases have 2 components, CF(1) - the catalytic core - and CF(0) - the membrane proton channel. CF(1) has five subunits: alpha(3), beta(3), gamma(1), delta(1), epsilon(1). CF(0) has three main subunits: a(1), b(2) and c(9-12). The alpha and beta chains form an alternating ring which encloses part of the gamma chain. CF(1) is attached to CF(0) by a central stalk formed by the gamma and epsilon chains, while a peripheral stalk is formed by the delta and b chains.

Its subcellular location is the cell membrane. It carries out the reaction ATP + H2O + 4 H(+)(in) = ADP + phosphate + 5 H(+)(out). In terms of biological role, produces ATP from ADP in the presence of a proton gradient across the membrane. The alpha chain is a regulatory subunit. The sequence is that of ATP synthase subunit alpha from Streptomyces lividans.